The chain runs to 123 residues: Large ribosomal subunit protein uL14 (123 aa).

It belongs to the universal ribosomal protein uL14 family. As to quaternary structure, part of the 50S ribosomal subunit. Forms a cluster with proteins L3 and L19. In the 70S ribosome, L14 and L19 interact and together make contacts with the 16S rRNA in bridges B5 and B8.

Functionally, binds to 23S rRNA. Forms part of two intersubunit bridges in the 70S ribosome. This chain is Large ribosomal subunit protein uL14, found in Vibrio vulnificus (strain CMCP6).